We begin with the raw amino-acid sequence, 474 residues long: ABHD16B (474 aa).

The AB hydrolase-1 domain maps to 175–293 (VICCEGNAGF…MPQSWKGLVV (119 aa)). Residues Ser-248, Asp-323, and His-423 each act as charge relay system in the active site.

It belongs to the AB hydrolase superfamily. ABHD16 family.

It catalyses the reaction a 1,2-diacyl-sn-glycero-3-phospho-L-serine + H2O = a 2-acyl-sn-glycero-3-phospho-L-serine + a fatty acid + H(+). The catalysed reaction is a 1-acylglycerol + H2O = glycerol + a fatty acid + H(+). It carries out the reaction 1-(9Z-octadecenoyl)-glycerol + H2O = glycerol + (9Z)-octadecenoate + H(+). In terms of biological role, hydrolyzes the sn-1 position of glycerophospholipids with high specificity towards phosphatidylserine (PS), PS-PLA1 enzyme. Also hydrolyzes the acyl chain of glycerolipids with a preference for the monoacylglycerol (MAG) 1-acylglycerol, MAG lipase. Plays a regulatory role in cellular lipid homeostasis by modulating genes involved in neutral lipid degradation and in phospholipid synthesis and composition. This is ABHD16B from Rattus norvegicus (Rat).